The sequence spans 628 residues: tRNA uridine 5-carboxymethylaminomethyl modification enzyme MnmG (628 aa).

14–19 is a binding site for FAD; that stretch reads GAGHAG. 274–288 serves as a coordination point for NAD(+); that stretch reads GPRYCPSIEDKIVRF.

This sequence belongs to the MnmG family. As to quaternary structure, homodimer. Heterotetramer of two MnmE and two MnmG subunits. It depends on FAD as a cofactor.

Its subcellular location is the cytoplasm. In terms of biological role, NAD-binding protein involved in the addition of a carboxymethylaminomethyl (cmnm) group at the wobble position (U34) of certain tRNAs, forming tRNA-cmnm(5)s(2)U34. This chain is tRNA uridine 5-carboxymethylaminomethyl modification enzyme MnmG, found in Clostridium kluyveri (strain ATCC 8527 / DSM 555 / NBRC 12016 / NCIMB 10680 / K1).